The primary structure comprises 91 residues: MDKVKYPVLTEKTIRLLERNQYCFDVDLKASKTEIKQWIQDFFKVKVVAMNSHRPPKKKKRIGPVLGYPVRYKRMIITLESNYSIPLFLNK.

It belongs to the universal ribosomal protein uL23 family. Part of the 50S ribosomal subunit.

The protein resides in the plastid. Its subcellular location is the chloroplast. In terms of biological role, binds to 23S rRNA. The protein is Large ribosomal subunit protein uL23c (rpl23) of Anthoceros angustus (Hornwort).